The primary structure comprises 349 residues: Anthranilate phosphoribosyltransferase (349 aa).

Residues G82, G85 to D86, N92 to T95, K110 to S118, and S122 contribute to the 5-phospho-alpha-D-ribose 1-diphosphate site. An anthranilate-binding site is contributed by G82. S94 lines the Mg(2+) pocket. Anthranilate is bound at residue N113. R168 is a binding site for anthranilate. 2 residues coordinate Mg(2+): D227 and E228.

Belongs to the anthranilate phosphoribosyltransferase family. In terms of assembly, homodimer. It depends on Mg(2+) as a cofactor.

It catalyses the reaction N-(5-phospho-beta-D-ribosyl)anthranilate + diphosphate = 5-phospho-alpha-D-ribose 1-diphosphate + anthranilate. It participates in amino-acid biosynthesis; L-tryptophan biosynthesis; L-tryptophan from chorismate: step 2/5. Its function is as follows. Catalyzes the transfer of the phosphoribosyl group of 5-phosphorylribose-1-pyrophosphate (PRPP) to anthranilate to yield N-(5'-phosphoribosyl)-anthranilate (PRA). The polypeptide is Anthranilate phosphoribosyltransferase (Acinetobacter baumannii (strain SDF)).